Consider the following 104-residue polypeptide: Large ribosomal subunit protein uL24 (104 aa).

This sequence belongs to the universal ribosomal protein uL24 family. Part of the 50S ribosomal subunit.

Its function is as follows. One of two assembly initiator proteins, it binds directly to the 5'-end of the 23S rRNA, where it nucleates assembly of the 50S subunit. Functionally, one of the proteins that surrounds the polypeptide exit tunnel on the outside of the subunit. This Erwinia tasmaniensis (strain DSM 17950 / CFBP 7177 / CIP 109463 / NCPPB 4357 / Et1/99) protein is Large ribosomal subunit protein uL24.